The chain runs to 316 residues: ATP synthase gamma chain (316 aa).

The protein belongs to the ATPase gamma chain family. As to quaternary structure, F-type ATPases have 2 components, CF(1) - the catalytic core - and CF(0) - the membrane proton channel. CF(1) has five subunits: alpha(3), beta(3), gamma(1), delta(1), epsilon(1). CF(0) has three main subunits: a, b and c.

It localises to the cellular thylakoid membrane. In terms of biological role, produces ATP from ADP in the presence of a proton gradient across the membrane. The gamma chain is believed to be important in regulating ATPase activity and the flow of protons through the CF(0) complex. The protein is ATP synthase gamma chain of Synechococcus sp. (strain WH7803).